A 230-amino-acid chain; its full sequence is Large ribosomal subunit protein bL25 (230 aa).

This sequence belongs to the bacterial ribosomal protein bL25 family. CTC subfamily. As to quaternary structure, part of the 50S ribosomal subunit; part of the 5S rRNA/L5/L18/L25 subcomplex. Contacts the 5S rRNA. Binds to the 5S rRNA independently of L5 and L18.

In terms of biological role, this is one of the proteins that binds to the 5S RNA in the ribosome where it forms part of the central protuberance. This is Large ribosomal subunit protein bL25 (rplY) from Rhodopseudomonas palustris (strain ATCC BAA-98 / CGA009).